Consider the following 379-residue polypeptide: UDP-4-amino-4-deoxy-L-arabinose--oxoglutarate aminotransferase (379 aa).

Lysine 182 carries the N6-(pyridoxal phosphate)lysine modification.

It belongs to the DegT/DnrJ/EryC1 family. ArnB subfamily. Homodimer. The cofactor is pyridoxal 5'-phosphate.

It carries out the reaction UDP-4-amino-4-deoxy-beta-L-arabinose + 2-oxoglutarate = UDP-beta-L-threo-pentopyranos-4-ulose + L-glutamate. Its pathway is nucleotide-sugar biosynthesis; UDP-4-deoxy-4-formamido-beta-L-arabinose biosynthesis; UDP-4-deoxy-4-formamido-beta-L-arabinose from UDP-alpha-D-glucuronate: step 2/3. It functions in the pathway bacterial outer membrane biogenesis; lipopolysaccharide biosynthesis. Catalyzes the conversion of UDP-4-keto-arabinose (UDP-Ara4O) to UDP-4-amino-4-deoxy-L-arabinose (UDP-L-Ara4N). The modified arabinose is attached to lipid A and is required for resistance to polymyxin and cationic antimicrobial peptides. The protein is UDP-4-amino-4-deoxy-L-arabinose--oxoglutarate aminotransferase of Escherichia coli O8 (strain IAI1).